The following is a 230-amino-acid chain: Cytochrome b6-f complex iron-sulfur subunit, chloroplastic (230 aa).

Residues 1–16 are compositionally biased toward low complexity; sequence MASTTLSATPTPSQLS. A disordered region spans residues 1–20; sequence MASTTLSATPTPSQLSAAKN. Residues 1–56 constitute a chloroplast transit peptide; it reads MASTTLSATPTPSQLSAAKNGAYSPSRALLGKTARGLYPEKEMVSRKVTCQATSIP. Residues 73 to 93 form a helical membrane-spanning segment; the sequence is LLGALSLPTAGMLIPYGAFFV. Positions 116 to 212 constitute a Rieske domain; it reads AAAWLKTHGP…CDISEEGKVV (97 aa). [2Fe-2S] cluster-binding residues include Cys-158, His-160, Cys-176, and His-179. A disulfide bond links Cys-163 and Cys-178.

This sequence belongs to the Rieske iron-sulfur protein family. As to quaternary structure, the 4 large subunits of the cytochrome b6-f complex are cytochrome b6, subunit IV (17 kDa polypeptide, petD), cytochrome f and the Rieske protein, while the 4 small subunits are petG, petL, petM and petN. The complex functions as a dimer. The cofactor is [2Fe-2S] cluster.

It localises to the plastid. It is found in the chloroplast thylakoid membrane. The enzyme catalyses 2 oxidized [plastocyanin] + a plastoquinol + 2 H(+)(in) = 2 reduced [plastocyanin] + a plastoquinone + 4 H(+)(out). In terms of biological role, component of the cytochrome b6-f complex, which mediates electron transfer between photosystem II (PSII) and photosystem I (PSI), cyclic electron flow around PSI, and state transitions. This Fritillaria agrestis (Stinkbells) protein is Cytochrome b6-f complex iron-sulfur subunit, chloroplastic (petC).